The sequence spans 859 residues: Protein O-mannosyl-transferase Tmtc1 (859 aa).

Over 1–22 (MHTPKCRRPSMSATLSHKDLAG) the chain is Cytoplasmic. Residues 23 to 43 (LAGCSALAFVLYLNTLNAGFV) form a helical membrane-spanning segment. Topologically, residues 44–103 (YDDRRAILANGDVTGARPLANLLRNDFWGTPLVDSGSHGSWRPLCVLSFRLNYLAGGMTP) are extracellular. A helical transmembrane segment spans residues 104-124 (LGYHLVNVMLHCVATWLVFLV). The Cytoplasmic segment spans residues 125–134 (ARTLLPSRMG). 2 helical membrane passes run 135-154 (VLAAGALFAVHPAHTEAVAG) and 155-174 (LVGRADLASCVCYLLAYLSY). The Cytoplasmic segment spans residues 175-189 (RRHMLNREWGSLILT). A helical transmembrane segment spans residues 190-210 (IMLALAALLCKETAITALLLC). The Extracellular segment spans residues 211 to 245 (GLCDVLSPVGRENSDKVCDGSISGLASFNFQRRFR). The chain crosses the membrane as a helical span at residues 246 to 266 (SLSILGFTLLCGLYCRLSLLP). Topologically, residues 267–288 (RPSTAFSAADNPTAHESCFWTR) are cytoplasmic. A helical transmembrane segment spans residues 289–309 (TLTFLYLPVANFGILLWPQEL). Residues 310 to 328 (SFDWGMEAVSRIRTLWDAR) lie on the Extracellular side of the membrane. Residues 329-349 (NILTAGFYGSLVAILWKGSGL) traverse the membrane as a helical segment. Topologically, residues 350–422 (RSAASPMDFA…SWTAAPILGT (73 aa)) are cytoplasmic. The helical transmembrane segment at 423–443 (AFLVLPFLPASNLLFYVGFVM) threads the bilayer. Residues 444–446 (AER) lie on the Extracellular side of the membrane. Residues 447–467 (VLYLPSVGYCLLFGLGFGHLW) form a helical membrane-spanning segment. The Cytoplasmic portion of the chain corresponds to 468 to 473 (QRVNSS). A helical membrane pass occupies residues 474 to 493 (WRSRLMLLCGLALLLGVHGV). The Extracellular segment spans residues 494-859 (RTFRRNLDWR…RMNVHKHENE (366 aa)). 9 TPR repeats span residues 518 to 551 (PKALGNLGSVLSAQGRYEEAELTLRMTLGHRPTM), 552 to 585 (ADAHFNLGVVHQKQLNFSSAIPCFRRAIELRPQL), 586 to 620 (AVAYLNLGTSLISLGDHRQEAISVLRTGARLEGSG), 632 to 665 (YTCYLQLSVLYRSDGRLQDAAAALRESLKALPLL), 671 to 704 (AVLHLRLGEILAELQDWNEAEHQQRLAMQLQPEQ), 705 to 739 (GAAYVTYGQTLARNGSRLAEAESWFKRALQLAPLE), 740 to 773 (PSSHHHYADFLEQQERHHEALGLRLRAAALAPQD), 774 to 807 (YTLQSCVADALRLLNRLAEAELWYRKAVTLQPMA), and 808 to 841 (AHAHANLGAILQMRGLRKEAVACYHKALELQPGH). N-linked (GlcNAc...) asparagine glycosylation occurs at Asn-567. An N-linked (GlcNAc...) asparagine glycan is attached at Asn-718.

This sequence belongs to the TMTC family.

It localises to the membrane. The protein localises to the endoplasmic reticulum. The enzyme catalyses a di-trans,poly-cis-dolichyl beta-D-mannosyl phosphate + L-seryl-[protein] = 3-O-(alpha-D-mannosyl)-L-seryl-[protein] + a di-trans,poly-cis-dolichyl phosphate + H(+). It carries out the reaction a di-trans,poly-cis-dolichyl beta-D-mannosyl phosphate + L-threonyl-[protein] = 3-O-(alpha-D-mannosyl)-L-threonyl-[protein] + a di-trans,poly-cis-dolichyl phosphate + H(+). The protein operates within protein modification; protein glycosylation. Transfers mannosyl residues to the hydroxyl group of serine or threonine residues. The chain is Protein O-mannosyl-transferase Tmtc1 from Drosophila melanogaster (Fruit fly).